The sequence spans 399 residues: Exodeoxyribonuclease 7 large subunit (399 aa).

The protein belongs to the XseA family. Heterooligomer composed of large and small subunits.

The protein localises to the cytoplasm. It catalyses the reaction Exonucleolytic cleavage in either 5'- to 3'- or 3'- to 5'-direction to yield nucleoside 5'-phosphates.. Its function is as follows. Bidirectionally degrades single-stranded DNA into large acid-insoluble oligonucleotides, which are then degraded further into small acid-soluble oligonucleotides. The polypeptide is Exodeoxyribonuclease 7 large subunit (Clostridium botulinum (strain Eklund 17B / Type B)).